The sequence spans 64 residues: Large ribosomal subunit protein bL35 (64 aa).

It belongs to the bacterial ribosomal protein bL35 family.

The polypeptide is Large ribosomal subunit protein bL35 (Pseudomonas putida (strain W619)).